The sequence spans 962 residues: Nonribosomal peptide synthetase atqA (962 aa).

The tract at residues 34 to 462 is adenylation (A) domain; sequence AANTTEGIIA…DGRTKEMVNI (429 aa). In terms of domain architecture, Carrier spans 595-672; sequence SAEEATILSI…GLCQRIAATS (78 aa). Ser630 is modified (O-(pantetheine 4'-phosphoryl)serine). A thioesterase (TE) domain region spans residues 694 to 951; that stretch reads PLWLVHPGVG…KPEYVANFAK (258 aa).

The protein belongs to the NRP synthetase family.

The protein operates within secondary metabolite biosynthesis. In terms of biological role, nonribosomal peptide synthetase; part of the gene cluster that mediates the biosynthesis of asterriquinone CT5, a natural product that displays potential biological activities including antitumor and insulin mimic activities. The nonribosomal peptide synthetase atqA is responsible for the production of the benzoquinone derivative didemethylasterriquinone D (DDAQ D), via condensation of 2 indole pyruvic acid (IPA) molecules. The symmetric connectivity of the 2 IPA molecules is thought to arise by head-to-tail dual Claisen condensations catalyzed by the TE domain of atqA. DDAQ D represents the core structure of asterriquinones and is further modified by yet unidentified tailoring enzymes to lead to the production of asterriquinone CT5. The protein is Nonribosomal peptide synthetase atqA of Aspergillus terreus (strain NIH 2624 / FGSC A1156).